The sequence spans 456 residues: ACT domain-containing protein ACR5 (456 aa).

4 ACT domains span residues 39-115, 130-207, 271-347, and 349-432; these read VIKV…FSPS, VVEL…SSGR, IVMI…VSEG, and KLEL…PSPQ.

As to expression, expressed in stems and siliques.

Functionally, may bind amino acids. The chain is ACT domain-containing protein ACR5 from Arabidopsis thaliana (Mouse-ear cress).